The chain runs to 445 residues: Phosphoglucosamine mutase (445 aa).

Serine 102 (phosphoserine intermediate) is an active-site residue. Mg(2+)-binding residues include serine 102, aspartate 241, aspartate 243, and aspartate 245. Serine 102 carries the phosphoserine modification.

The protein belongs to the phosphohexose mutase family. The cofactor is Mg(2+). Activated by phosphorylation.

It catalyses the reaction alpha-D-glucosamine 1-phosphate = D-glucosamine 6-phosphate. Functionally, catalyzes the conversion of glucosamine-6-phosphate to glucosamine-1-phosphate. The sequence is that of Phosphoglucosamine mutase from Acinetobacter baumannii (strain AB0057).